Here is a 544-residue protein sequence, read N- to C-terminus: Probable protein kinase UbiB (544 aa).

Residues 123–501 (DFDIKPLASA…KRQQAKGQFL (379 aa)) form the Protein kinase domain. Residues 129–137 (LASASIAQV) and K152 contribute to the ATP site. D287 acts as the Proton acceptor in catalysis. Residues 515–537 (LLTSNITVLASISAATGAAFWLF) traverse the membrane as a helical segment.

Belongs to the ABC1 family. UbiB subfamily.

The protein resides in the cell inner membrane. It functions in the pathway cofactor biosynthesis; ubiquinone biosynthesis [regulation]. Is probably a protein kinase regulator of UbiI activity which is involved in aerobic coenzyme Q (ubiquinone) biosynthesis. The protein is Probable protein kinase UbiB of Aliivibrio fischeri (strain MJ11) (Vibrio fischeri).